Reading from the N-terminus, the 152-residue chain is MAVKIRLKRLGKIRAPYYRVVVADSRTRRDGRVIEEIGKYHPTEDPSVIDIASERAQYWLGVGAQPTEQVLALLKVTGDWQKFKGLPGAEGTLRVKDGAAAASPDAAKEKVAAIEAEAEKHKAKASEKKAAAAASADEAGSAAADDAEGSES.

Positions 118–130 (AEKHKAKASEKKA) are enriched in basic and acidic residues. A disordered region spans residues 118–152 (AEKHKAKASEKKAAAAASADEAGSAAADDAEGSES). A compositionally biased stretch (low complexity) spans 131–144 (AAAASADEAGSAAA).

It belongs to the bacterial ribosomal protein bS16 family.

This Beutenbergia cavernae (strain ATCC BAA-8 / DSM 12333 / CCUG 43141 / JCM 11478 / NBRC 16432 / NCIMB 13614 / HKI 0122) protein is Small ribosomal subunit protein bS16.